The primary structure comprises 469 residues: Alpha,alpha-trehalose-phosphate synthase [UDP-forming] (469 aa).

Tyr87 and Asp141 together coordinate D-glucose 6-phosphate. Arg279 and Lys284 together coordinate UDP. UDP-alpha-D-glucose contacts are provided by Arg279 and Lys284. Residue Arg317 participates in D-glucose 6-phosphate binding. 378–386 contacts UDP-alpha-D-glucose; sequence DGMNLVSYE. UDP is bound at residue 382-386; that stretch reads LVSYE.

It belongs to the glycosyltransferase 20 family.

It carries out the reaction D-glucose 6-phosphate + UDP-alpha-D-glucose = alpha,alpha-trehalose 6-phosphate + UDP + H(+). It functions in the pathway carbohydrate biosynthesis. In terms of biological role, synthase catalytic subunit of the trehalose synthase complex that catalyzes the production of trehalose from glucose-6-phosphate and UDP-alpha-D-glucose in a two step process. The disaccharide trehalose serves as a storage carbohydrate that is mobilized during spore germination. The protein is Alpha,alpha-trehalose-phosphate synthase [UDP-forming] of Yarrowia lipolytica (strain CLIB 122 / E 150) (Yeast).